We begin with the raw amino-acid sequence, 219 residues long: GPI-anchored hemophore PGA7 (219 aa).

The N-terminal stretch at 1–13 is a signal peptide; sequence MHFIFYLILLVSA. In terms of domain architecture, CFEM spans 17 to 126; that stretch reads GNFGTYPKVP…SMLSTAAGDA (110 aa). 4 disulfides stabilise this stretch: C45–C85, C49–C80, C59–C66, and C68–C101. D63 is a heme binding site. A disordered region spans residues 151-194; sequence VVSETGSASETGSSESAQSTTTGSSSTGSSSTDSSSSSSSSPSS. Residues 153–194 show a composition bias toward low complexity; that stretch reads SETGSASETGSSESAQSTTTGSSSTGSSSTDSSSSSSSSPSS. The GPI-anchor amidated serine moiety is linked to residue S194. The propeptide at 195–219 is removed in mature form; that stretch reads SANFAVLQTGGIGSVILGFMMYLLV.

It belongs to the RBT5 family. Interacts with RBT5. In terms of processing, the GPI-anchor is attached to the protein in the endoplasmic reticulum and serves to target the protein to the cell surface. There, the glucosamine-inositol phospholipid moiety is cleaved off and the GPI-modified mannoprotein is covalently attached via its lipidless GPI glycan remnant to the 1,6-beta-glucan of the outer cell wall layer.

It is found in the secreted. The protein resides in the cell wall. It localises to the cell membrane. In terms of biological role, GPI-linked hyphal surface heme-binding protein involved in heme-iron utilization. Heme transfer occurs between PGA7, RBT5 and CSA2 supporting a model in which the 3 CFEM proteins cooperate in a heme-acquisition system and form a cross-cell wall heme-transfer cascade. The ability to acquire iron from host tissues is a major virulence factor of pathogenic microorganisms. Required for biofilm formation. The sequence is that of GPI-anchored hemophore PGA7 from Candida albicans (strain SC5314 / ATCC MYA-2876) (Yeast).